The primary structure comprises 215 residues: Thiamine-phosphate synthase (215 aa).

4-amino-2-methyl-5-(diphosphooxymethyl)pyrimidine contacts are provided by residues 37–41 and Asn-69; that span reads QLRIK. Positions 70 and 89 each coordinate Mg(2+). Position 108 (Ser-108) interacts with 4-amino-2-methyl-5-(diphosphooxymethyl)pyrimidine. 134–136 lines the 2-[(2R,5Z)-2-carboxy-4-methylthiazol-5(2H)-ylidene]ethyl phosphate pocket; the sequence is TQT. Lys-137 provides a ligand contact to 4-amino-2-methyl-5-(diphosphooxymethyl)pyrimidine. 2-[(2R,5Z)-2-carboxy-4-methylthiazol-5(2H)-ylidene]ethyl phosphate-binding positions include Gly-166 and 186–187; that span reads VS.

This sequence belongs to the thiamine-phosphate synthase family. Mg(2+) serves as cofactor.

The catalysed reaction is 2-[(2R,5Z)-2-carboxy-4-methylthiazol-5(2H)-ylidene]ethyl phosphate + 4-amino-2-methyl-5-(diphosphooxymethyl)pyrimidine + 2 H(+) = thiamine phosphate + CO2 + diphosphate. It catalyses the reaction 2-(2-carboxy-4-methylthiazol-5-yl)ethyl phosphate + 4-amino-2-methyl-5-(diphosphooxymethyl)pyrimidine + 2 H(+) = thiamine phosphate + CO2 + diphosphate. It carries out the reaction 4-methyl-5-(2-phosphooxyethyl)-thiazole + 4-amino-2-methyl-5-(diphosphooxymethyl)pyrimidine + H(+) = thiamine phosphate + diphosphate. It participates in cofactor biosynthesis; thiamine diphosphate biosynthesis; thiamine phosphate from 4-amino-2-methyl-5-diphosphomethylpyrimidine and 4-methyl-5-(2-phosphoethyl)-thiazole: step 1/1. Condenses 4-methyl-5-(beta-hydroxyethyl)thiazole monophosphate (THZ-P) and 2-methyl-4-amino-5-hydroxymethyl pyrimidine pyrophosphate (HMP-PP) to form thiamine monophosphate (TMP). The sequence is that of Thiamine-phosphate synthase from Yersinia pseudotuberculosis serotype I (strain IP32953).